The following is a 710-amino-acid chain: Integrator complex subunit 10 (710 aa).

Residues 366 to 393 (IHKKRKLAEGREKTMSSDDEDPSGKARS) form a disordered region. Residues 372–381 (LAEGREKTMS) show a composition bias toward basic and acidic residues.

Belongs to the Integrator subunit 10 family. As to quaternary structure, component of the Integrator complex, composed of core subunits INTS1, INTS2, INTS3, INTS4, INTS5, INTS6, INTS7, INTS8, INTS9/RC74, INTS10, INTS11/CPSF3L, INTS12, INTS13, INTS14 and INTS15. The core complex associates with protein phosphatase 2A subunits PPP2CA and PPP2R1A, to form the Integrator-PP2A (INTAC) complex. INTS10 is part of the tail subcomplex, composed of INTS10, INTS13, INTS14 and INTS15.

Its subcellular location is the nucleus. Component of the integrator complex, a multiprotein complex that terminates RNA polymerase II (Pol II) transcription in the promoter-proximal region of genes. The integrator complex provides a quality checkpoint during transcription elongation by driving premature transcription termination of transcripts that are unfavorably configured for transcriptional elongation: the complex terminates transcription by (1) catalyzing dephosphorylation of the C-terminal domain (CTD) of Pol II subunit POLR2A/RPB1 and SUPT5H/SPT5, (2) degrading the exiting nascent RNA transcript via endonuclease activity and (3) promoting the release of Pol II from bound DNA. The integrator complex is also involved in terminating the synthesis of non-coding Pol II transcripts, such as enhancer RNAs (eRNAs), small nuclear RNAs (snRNAs), telomerase RNAs and long non-coding RNAs (lncRNAs). The sequence is that of Integrator complex subunit 10 (INTS10) from Gallus gallus (Chicken).